A 195-amino-acid chain; its full sequence is Phosphoheptose isomerase (195 aa).

The SIS domain occupies 35–195 (LCVALYRGDK…EKEIFGDGVN (161 aa)). Substrate is bound at residue 51–53 (NGG). 2 residues coordinate Zn(2+): His60 and Glu64. Residues Glu64, 93 to 94 (ND), 119 to 121 (STS), Ser124, and Gln171 contribute to the substrate site. Residues Gln171 and His179 each contribute to the Zn(2+) site.

The protein belongs to the SIS family. GmhA subfamily. In terms of assembly, homotetramer. It depends on Zn(2+) as a cofactor.

It is found in the cytoplasm. It catalyses the reaction 2 D-sedoheptulose 7-phosphate = D-glycero-alpha-D-manno-heptose 7-phosphate + D-glycero-beta-D-manno-heptose 7-phosphate. Its pathway is carbohydrate biosynthesis; D-glycero-D-manno-heptose 7-phosphate biosynthesis; D-glycero-alpha-D-manno-heptose 7-phosphate and D-glycero-beta-D-manno-heptose 7-phosphate from sedoheptulose 7-phosphate: step 1/1. Its function is as follows. Catalyzes the isomerization of sedoheptulose 7-phosphate in D-glycero-D-manno-heptose 7-phosphate. In Sulfurimonas denitrificans (strain ATCC 33889 / DSM 1251) (Thiomicrospira denitrificans (strain ATCC 33889 / DSM 1251)), this protein is Phosphoheptose isomerase.